The following is a 143-amino-acid chain: Large ribosomal subunit protein uL16 (143 aa).

The span at 1 to 17 (MLQPKRTKFRKAHKGRI) shows a compositional bias: basic residues. The tract at residues 1–21 (MLQPKRTKFRKAHKGRIHGNA) is disordered.

The protein belongs to the universal ribosomal protein uL16 family. Part of the 50S ribosomal subunit.

Functionally, binds 23S rRNA and is also seen to make contacts with the A and possibly P site tRNAs. The protein is Large ribosomal subunit protein uL16 of Rhizorhabdus wittichii (strain DSM 6014 / CCUG 31198 / JCM 15750 / NBRC 105917 / EY 4224 / RW1) (Sphingomonas wittichii).